Consider the following 104-residue polypeptide: L-rhamnose mutarotase (104 aa).

Tyr-18 contacts substrate. His-22 (proton donor) is an active-site residue. Substrate-binding positions include Tyr-41 and 76-77 (WW).

It belongs to the rhamnose mutarotase family. In terms of assembly, homodimer.

The protein localises to the cytoplasm. It carries out the reaction alpha-L-rhamnose = beta-L-rhamnose. The protein operates within carbohydrate metabolism; L-rhamnose metabolism. Its function is as follows. Involved in the anomeric conversion of L-rhamnose. This Cronobacter sakazakii (strain ATCC BAA-894) (Enterobacter sakazakii) protein is L-rhamnose mutarotase.